The following is a 102-amino-acid chain: Ferredoxin-thioredoxin reductase, catalytic chain (102 aa).

Cysteine 53 contributes to the [4Fe-4S] cluster binding site. Cysteine 55 serves as the catalytic Nucleophile. Cysteine 55 and cysteine 85 are joined by a disulfide. [4Fe-4S] cluster contacts are provided by cysteine 72, cysteine 74, and cysteine 83.

The protein belongs to the ferredoxin thioredoxin reductase beta subunit family. As to quaternary structure, heterodimer of subunit A (variable subunit) and subunit B (catalytic subunit). Heterodimeric FTR forms a complex with ferredoxin and thioredoxin. [4Fe-4S] cluster serves as cofactor.

It is found in the plastid. It localises to the chloroplast. It carries out the reaction [thioredoxin]-disulfide + 2 reduced [2Fe-2S]-[ferredoxin] + 2 H(+) = [thioredoxin]-dithiol + 2 oxidized [2Fe-2S]-[ferredoxin]. In terms of biological role, catalytic subunit of the ferredoxin-thioredoxin reductase (FTR), which catalyzes the two-electron reduction of thioredoxins by the electrons provided by reduced ferredoxin. This Guillardia theta (Cryptophyte) protein is Ferredoxin-thioredoxin reductase, catalytic chain (ftrB).